We begin with the raw amino-acid sequence, 103 residues long: MQPNDITFFQRFQNDILAGRKTITIRDASESHFKAGDMLRVGRFEDDGYFCTIEVTGTSTVTLDTLNEKHAQQENMSLDELKRVIAEIYPNQTQFYVIDFKCL.

One can recognise an ASCH domain in the interval 6–94 (ITFFQRFQND…IAEIYPNQTQ (89 aa)). K21 acts as the Proton acceptor in catalysis. Residue T24 is the Nucleophile of the active site. The active-site Proton donor is E74.

Belongs to the N(4)-acetylcytidine amidohydrolase family.

The enzyme catalyses N(4)-acetylcytidine + H2O = cytidine + acetate + H(+). It carries out the reaction N(4)-acetyl-2'-deoxycytidine + H2O = 2'-deoxycytidine + acetate + H(+). The catalysed reaction is N(4)-acetylcytosine + H2O = cytosine + acetate + H(+). Catalyzes the hydrolysis of N(4)-acetylcytidine (ac4C). In Salmonella schwarzengrund (strain CVM19633), this protein is N(4)-acetylcytidine amidohydrolase (yqfB).